The sequence spans 392 residues: Major outer membrane porin (392 aa).

The signal sequence occupies residues 1–22; sequence MKKLLKSALLFAAAGSALSLQA.

It belongs to the chlamydial porin (CP) (TC 1.B.2) family. In terms of assembly, part of a disulfide cross-linked outer membrane complex (COMC) composed of the major outer membrane porin (MOMP), the small cysteine-rich protein (OmcA) and the large cysteine-rich periplasmic protein (OmcB).

It localises to the cell outer membrane. Its function is as follows. In elementary bodies (EBs, the infectious stage, which is able to survive outside the host cell) provides the structural integrity of the outer envelope through disulfide cross-links with the small cysteine-rich protein and the large cysteine-rich periplasmic protein. It has been described in publications as the Sarkosyl-insoluble COMC (Chlamydia outer membrane complex), and serves as the functional equivalent of peptidoglycan. Functionally, permits diffusion of specific solutes through the outer membrane. This chain is Major outer membrane porin (ompA), found in Chlamydia psittaci (Chlamydophila psittaci).